A 20-amino-acid polypeptide reads, in one-letter code: Putative 18 kDa spermidine-binding protein (20 aa).

As to quaternary structure, dimer of 18 kDa and 60 kDa subunit.

It is found in the microsome membrane. Its subcellular location is the endoplasmic reticulum membrane. In terms of biological role, may have spermidine-binding activity. This is Putative 18 kDa spermidine-binding protein from Zea mays (Maize).